The following is a 423-amino-acid chain: Serine hydroxymethyltransferase (423 aa).

(6S)-5,6,7,8-tetrahydrofolate contacts are provided by residues Leu126 and 130–132; that span reads GHL. Lys235 is modified (N6-(pyridoxal phosphate)lysine).

Belongs to the SHMT family. Homodimer. Pyridoxal 5'-phosphate serves as cofactor.

The protein localises to the cytoplasm. It carries out the reaction (6R)-5,10-methylene-5,6,7,8-tetrahydrofolate + glycine + H2O = (6S)-5,6,7,8-tetrahydrofolate + L-serine. The protein operates within one-carbon metabolism; tetrahydrofolate interconversion. It participates in amino-acid biosynthesis; glycine biosynthesis; glycine from L-serine: step 1/1. Functionally, catalyzes the reversible interconversion of serine and glycine with tetrahydrofolate (THF) serving as the one-carbon carrier. This reaction serves as the major source of one-carbon groups required for the biosynthesis of purines, thymidylate, methionine, and other important biomolecules. Also exhibits THF-independent aldolase activity toward beta-hydroxyamino acids, producing glycine and aldehydes, via a retro-aldol mechanism. The protein is Serine hydroxymethyltransferase of Sorangium cellulosum (strain So ce56) (Polyangium cellulosum (strain So ce56)).